We begin with the raw amino-acid sequence, 419 residues long: Dual specificity mitogen-activated protein kinase kinase 7 (419 aa).

Ala2 carries the N-acetylalanine modification. Residues 2–30 are a coiled coil; the sequence is AASSLEQKLSRLEAKLKQENREARRRIDL. Basic and acidic residues predominate over residues 18–30; it reads KQENREARRRIDL. Positions 18 to 77 are disordered; sequence KQENREARRRIDLNLDISPQRPRPTLQLPLANDGGSRSPSSESSPQHPTPPSRPRHMLGL. Low complexity predominate over residues 36 to 63; that stretch reads PQRPRPTLQLPLANDGGSRSPSSESSPQ. The d Domain stretch occupies residues 37 to 57; sequence QRPRPTLQLPLANDGGSRSPS. A Protein kinase domain is found at 120–380; the sequence is LENLGEMGSG…YNKLLEHSFI (261 aa). Residues 126–134 and Lys149 each bind ATP; that span reads MGSGTCGQV. Asp243 serves as the catalytic Proton acceptor. A Phosphoserine; by MAP3K modification is found at Ser271. Thr275 is subject to Phosphothreonine; by MAP3K. The interval 377–400 is DVD domain; that stretch reads HSFIKHYETLEVDVASWFKDVMAK. Ser411 carries the post-translational modification Phosphoserine.

The protein belongs to the protein kinase superfamily. STE Ser/Thr protein kinase family. MAP kinase kinase subfamily. In terms of assembly, interacts with VRK2. Interacts (via its D domain) with its substrates MAPK8/JNK1, MAPK9/JNK2 and MAPK10/JNK3. Interacts (via its DVD domain) with MAP3Ks activators like MAP3K5/ASK1 and MAP3K1/MEKK1. Interacts with MAPK8IP1/JIP1, MAPK8IP2/JIP2 and MAPK8IP3/JIP3 scaffold proteins. Interacts with RASSF7, the interaction promotes phosphorylation. Found in a complex with SH3RF1, RAC1, MAP3K11/MLK3, MAPK8IP1/JIP1 and MAPK8/JNK1. Found in a complex with SH3RF1, RAC2, MAP3K7/TAK1, MAPK8IP1/JIP1, MAPK8/JNK1 and MAPK9/JNK2. Mg(2+) serves as cofactor. Activated by phosphorylation on Ser-271 and Thr-275 by MAP kinase kinase kinases (MAP3Ks).

The protein localises to the nucleus. Its subcellular location is the cytoplasm. It catalyses the reaction L-seryl-[protein] + ATP = O-phospho-L-seryl-[protein] + ADP + H(+). The catalysed reaction is L-threonyl-[protein] + ATP = O-phospho-L-threonyl-[protein] + ADP + H(+). It carries out the reaction L-tyrosyl-[protein] + ATP = O-phospho-L-tyrosyl-[protein] + ADP + H(+). With respect to regulation, activated by phosphorylation by specific MAP kinase kinase kinases such as MAP3K1/MEKK1, MAP3K3/MEKK3, MAP3K11/MLK3 and MAP3K12/DLK. Its function is as follows. Dual specificity protein kinase which acts as an essential component of the MAP kinase signal transduction pathway. Essential component of the stress-activated protein kinase/c-Jun N-terminal kinase (SAP/JNK) signaling pathway. With MAP2K4/MKK4, is the one of the only known kinase to directly activate the stress-activated protein kinase/c-Jun N-terminal kinases MAPK8/JNK1, MAPK9/JNK2 and MAPK10/JNK3. MAP2K4/MKK4 and MAP2K7/MKK7 both activate the JNKs by phosphorylation, but they differ in their preference for the phosphorylation site in the Thr-Pro-Tyr motif. MAP2K4/MKK4 shows preference for phosphorylation of the Tyr residue and MAP2K7/MKK7 for the Thr residue. The monophosphorylation of JNKs on the Thr residue is sufficient to increase JNK activity indicating that MAP2K7/MKK7 is important to trigger JNK activity, while the additional phosphorylation of the Tyr residue by MAP2K4/MKK4 ensures optimal JNK activation. Has a specific role in JNK signal transduction pathway activated by pro-inflammatory cytokines. The MKK/JNK signaling pathway is also involved in mitochondrial death signaling pathway, including the release cytochrome c, leading to apoptosis. Part of a non-canonical MAPK signaling pathway, composed of the upstream MAP3K12 kinase and downstream MAP kinases MAPK1/ERK2 and MAPK3/ERK1, that enhances the AP-1-mediated transcription of APP in response to APOE. In Rattus norvegicus (Rat), this protein is Dual specificity mitogen-activated protein kinase kinase 7.